We begin with the raw amino-acid sequence, 523 residues long: FAD-dependent monooxygenase drtC (523 aa).

Residues 77–252 form the FAD-binding PCMH-type domain; sequence TSLNSACIVL…TNFEVRAFPQ (176 aa).

It belongs to the oxygen-dependent FAD-linked oxidoreductase family. It depends on FAD as a cofactor.

Its pathway is secondary metabolite biosynthesis; terpenoid biosynthesis. Functionally, FAD-dependent monooxygenase; part of the gene cluster that mediates the biosynthesis of various drimane-type sesquiterpene esters, compounds that exhibit diverse biological activities and are widely present in eukaryotes. The pathway begins with the synthesis of the backbone drimenol by the terpene cyclase drtB using farnesyl pyrophosphate (FPP) as substrate. The cytochrome P450 monooxygenase drtD is then responsible for the hydroxylations at C-6, C-9 and C-12, as well as the oxidation of hydroxyl groups at C-6 and C-11 to a ketone and an aldehyde, respectively. Then, the biosynthesis can go in two directions, either the hydroxylated drimenol is further hydroxylated at C-2 and C-3 by an enzyme(s) not associated with the drt cluster, or the FAD-binding oxidoreductase drtC further oxidizes C-11 or C-12 to form the butyrolactone ring. DrtB, drtD and drtC are solely responsible for the formation of the different drimane structures observed during drimane sesquiterpenes biosynthesis. The polyketide synthase drtA synthesizes different lengths (C6 and C8) of PKS chains, which are then oxidized to varying degrees by the short-chain dehydrogenase drtF. Finally, these PKS chains are transferred onto drimane sesquiterpenes by the acyltransferase drtE, forming the sesquiterpene esters. In addition to the different fatty acyl-CoA chains produced by drtA, drtE is also able to use cinnamoyl-CoA as a substrate. This chain is FAD-dependent monooxygenase drtC, found in Aspergillus calidoustus.